Here is a 620-residue protein sequence, read N- to C-terminus: Chaperone protein HscA homolog (620 aa).

Belongs to the heat shock protein 70 family.

Its function is as follows. Chaperone involved in the maturation of iron-sulfur cluster-containing proteins. Has a low intrinsic ATPase activity which is markedly stimulated by HscB. The sequence is that of Chaperone protein HscA homolog from Pseudomonas syringae pv. tomato (strain ATCC BAA-871 / DC3000).